We begin with the raw amino-acid sequence, 358 residues long: MAAMLASKQGAFMGRSSFAPAPKGVASRGSLQVVAGLKEVRDRIASVKNTQKITDAMKLVAAAKVRRAQEAVVNGRPFSENLVKVLYGVNQRVRQEDVDSPLCAVRPVKSVLLVVLTGDRGLCGGYNNFIIKKTEARYRELTAMGVKVNLVCVGRKGAQYFARRKQYNIVKSFSLGAAPSTKEAQGIADEIFASFIAQESDKVELVFTKFISLINSNPTIQTLLPMTPMGELCDVDGKCVDAADDEIFKLTTKGGEFAVEREKTTIETEALDPSLIFEQEPAQILDALLPLYMSSCLLRSLQEALASELAARMNAMNNASDNAKELKKGLTVQYNKQRQAKITQELAEIVGGAAATSG.

The transit peptide at Met1–Ala35 directs the protein to the chloroplast. Residue Cys123 is part of the active site. Cys233 and Cys239 are disulfide-bonded.

The protein belongs to the ATPase gamma chain family. As to quaternary structure, F-type ATPases have 2 components, F(1) - the catalytic core - and F(0) - the membrane proton channel. F(1) has five subunits: alpha(3), beta(3), gamma(1), delta(1), epsilon(1). F(0) has four main subunits: a(1), b(1), b'(1) and c(10-14). The alpha and beta chains form an alternating ring which encloses part of the gamma chain. F(1) is attached to F(0) by a central stalk formed by the gamma and epsilon chains, while a peripheral stalk is formed by the delta, b and b' chains.

Its subcellular location is the plastid. It localises to the chloroplast thylakoid membrane. In terms of biological role, f(1)F(0) ATP synthase produces ATP from ADP in the presence of a proton or sodium gradient. F-type ATPases consist of two structural domains, F(1) containing the extramembraneous catalytic core and F(0) containing the membrane proton channel, linked together by a central stalk and a peripheral stalk. During catalysis, ATP synthesis in the catalytic domain of F(1) is coupled via a rotary mechanism of the central stalk subunits to proton translocation. Its function is as follows. Produces ATP from ADP in the presence of a proton gradient across the membrane. The gamma chain is believed to be important in regulating ATPase activity and the flow of protons through the CF(0) complex. The polypeptide is ATP synthase gamma chain, chloroplastic (Chlamydomonas reinhardtii (Chlamydomonas smithii)).